The primary structure comprises 2531 residues: Serine/threonine-protein kinase ATR (2531 aa).

An FAT domain is found at 1490 to 2067 (LIVKVAETFG…MWQSAYLLRQ (578 aa)). The PI3K/PI4K catalytic domain maps to 2192–2512 (FSDKVKVLHS…VSQLASSLIE (321 aa)). A G-loop region spans residues 2198–2204 (VLHSNTK). The tract at residues 2368–2376 (GLGDRHTKN) is catalytic loop. Positions 2387 to 2411 (HVDFDMIFNKGETLGTPELVPFRLT) are activation loop. The 33-residue stretch at 2499 to 2531 (HPMQVSQLASSLIELATSEEKLSEMYLGWMATL) folds into the FATC domain.

The protein belongs to the PI3/PI4-kinase family. ATM subfamily. It depends on Mn(2+) as a cofactor.

It is found in the nucleus. The catalysed reaction is L-seryl-[protein] + ATP = O-phospho-L-seryl-[protein] + ADP + H(+). It carries out the reaction L-threonyl-[protein] + ATP = O-phospho-L-threonyl-[protein] + ADP + H(+). In terms of biological role, serine/threonine protein kinase which activates checkpoint signaling upon genotoxic stresses such as ionizing radiation (IR), ultraviolet light (UV), or DNA replication stalling, thereby acting as a DNA damage sensor. Recognizes the substrate consensus sequence [ST]-Q. Phosphorylates various proteins, which collectively inhibits DNA replication and mitosis and promotes DNA repair and recombination. Prevents mitotic catastrophe by functioning in the S-phase checkpoint and cooperating with atm-1 in the checkpoint response to double-strand breaks (DSBs) after ionizing radiation (IR) to induce cell cycle arrest or apoptosis via the cep-1/p53 pathway. In response to ionizing radiation, probably required for the association between the brc-1-brd-1 heterodimer and rad-51 and let-70 in order to activate E3-ubiquitin ligase activity of the heterodimer and induce ubiquitination at DNA damage sites. The chain is Serine/threonine-protein kinase ATR from Caenorhabditis elegans.